A 479-amino-acid polypeptide reads, in one-letter code: RAC-gamma serine/threonine-protein kinase (479 aa).

Residue Ser-2 is modified to N-acetylserine. Positions 5 to 107 (TIVKEDWVQK…WTEAIQAVAD (103 aa)) constitute a PH domain. An intrachain disulfide couples Cys-59 to Cys-76. Residues 148–405 (FDYLKLLGKG…PKEIMRHSFF (258 aa)) enclose the Protein kinase domain. ATP is bound by residues 154–162 (LGKGTFGKV) and Lys-177. Catalysis depends on Asp-271, which acts as the Proton acceptor. The cysteines at positions 293 and 307 are disulfide-linked. Residue Thr-302 is glycosylated (O-linked (GlcNAc) threonine). Position 305 is a phosphothreonine; by PDPK1 (Thr-305). The O-linked (GlcNAc) threonine glycan is linked to Thr-309. Positions 406-479 (SGVNWQDVYD…QFSYSASGRE (74 aa)) constitute an AGC-kinase C-terminal domain. Positions 446-479 (ITPPEKDDDDGMDCMDNERRPHFPQFSYSASGRE) are disordered. A Phosphothreonine modification is found at Thr-447. The span at 451–460 (KDDDDGMDCM) shows a compositional bias: acidic residues. Position 472 is a phosphoserine; by PKC/PRKCZ (Ser-472). Residue Ser-472 is glycosylated (O-linked (GlcNAc) serine; alternate).

This sequence belongs to the protein kinase superfamily. AGC Ser/Thr protein kinase family. RAC subfamily. As to quaternary structure, interacts (via PH domain) with TCL1A; this enhances AKT3 phosphorylation and activation. Interacts with TRAF6. Interacts with KCTD20. Interacts with BTBD10. Post-translationally, phosphorylation on Thr-305 and Ser-472 is required for full activity. Phosphorylation of the activation loop at Thr-305 by PDPK1/PDK1 is a prerequisite for full activation. Phosphorylation at Ser-472 by mTORC2 in response to growth factors plays a key role in AKT1 activation by facilitating subsequent phosphorylation of the activation loop by PDPK1/PDK1. In terms of processing, ubiquitinated. When fully phosphorylated and translocated into the nucleus, undergoes 'Lys-48'-polyubiquitination catalyzed by TTC3, leading to its degradation by the proteasome. O-GlcNAcylation at Thr-302 and Thr-309 inhibits activating phosphorylation at Thr-305 via disrupting the interaction between AKT and PDPK1/PDK1.

The protein localises to the nucleus. The protein resides in the cytoplasm. It is found in the membrane. It carries out the reaction L-seryl-[protein] + ATP = O-phospho-L-seryl-[protein] + ADP + H(+). The catalysed reaction is L-threonyl-[protein] + ATP = O-phospho-L-threonyl-[protein] + ADP + H(+). Its activity is regulated as follows. Two specific sites, one in the kinase domain (Thr-305) and the other in the C-terminal regulatory region (Ser-472), need to be phosphorylated for its full activation. IGF-1 leads to the activation of AKT3, which may play a role in regulating cell survival. Functionally, AKT3 is one of 3 closely related serine/threonine-protein kinases (AKT1, AKT2 and AKT3) called the AKT kinase, and which regulate many processes including metabolism, proliferation, cell survival, growth and angiogenesis. This is mediated through serine and/or threonine phosphorylation of a range of downstream substrates. Over 100 substrate candidates have been reported so far, but for most of them, no isoform specificity has been reported. AKT3 is the least studied AKT isoform. It plays an important role in brain development and is crucial for the viability of malignant glioma cells. AKT3 isoform may also be the key molecule in up-regulation and down-regulation of MMP13 via IL13. Required for the coordination of mitochondrial biogenesis with growth factor-induced increases in cellular energy demands. Down-regulation by RNA interference reduces the expression of the phosphorylated form of BAD, resulting in the induction of caspase-dependent apoptosis. This Rattus norvegicus (Rat) protein is RAC-gamma serine/threonine-protein kinase (Akt3).